A 598-amino-acid polypeptide reads, in one-letter code: Dihydroxy-acid dehydratase, mitochondrial (598 aa).

The transit peptide at 1–18 directs the protein to the mitochondrion; the sequence is MMFCKLLRCQNGIASKRA. Cys84 lines the [2Fe-2S] cluster pocket. Asp116 is a binding site for Mg(2+). Position 157 (Cys157) interacts with [2Fe-2S] cluster. Asp158 lines the Mg(2+) pocket. Cys232 contacts [2Fe-2S] cluster. Glu485 serves as a coordination point for Mg(2+). Catalysis depends on Ser511, which acts as the Proton acceptor.

It belongs to the IlvD/Edd family. [2Fe-2S] cluster is required as a cofactor. Requires Mg(2+) as cofactor.

It is found in the mitochondrion. It catalyses the reaction (2R)-2,3-dihydroxy-3-methylbutanoate = 3-methyl-2-oxobutanoate + H2O. The enzyme catalyses (2R,3R)-2,3-dihydroxy-3-methylpentanoate = (S)-3-methyl-2-oxopentanoate + H2O. It functions in the pathway amino-acid biosynthesis; L-isoleucine biosynthesis; L-isoleucine from 2-oxobutanoate: step 3/4. Its pathway is amino-acid biosynthesis; L-valine biosynthesis; L-valine from pyruvate: step 3/4. Functionally, dihydroxyacid dehydratase that catalyzes the third step in the common pathway leading to biosynthesis of branched-chain amino acids. Catalyzes the dehydration of (2R,3R)-2,3-dihydroxy-3-methylpentanoate (2,3-dihydroxy-3-methylvalerate) into 2-oxo-3-methylpentanoate (2-oxo-3-methylvalerate) and of (2R)-2,3-dihydroxy-3-methylbutanoate (2,3-dihydroxyisovalerate) into 2-oxo-3-methylbutanoate (2-oxoisovalerate), the penultimate precursor to L-isoleucine and L-valine, respectively. This Schizosaccharomyces pombe (strain 972 / ATCC 24843) (Fission yeast) protein is Dihydroxy-acid dehydratase, mitochondrial.